Consider the following 89-residue polypeptide: Large ribosomal subunit protein bL27 (89 aa).

This sequence belongs to the bacterial ribosomal protein bL27 family.

The polypeptide is Large ribosomal subunit protein bL27 (Synechococcus sp. (strain JA-3-3Ab) (Cyanobacteria bacterium Yellowstone A-Prime)).